A 60-amino-acid polypeptide reads, in one-letter code: Ixodegrin YY-39 (60 aa).

Positions 1–21 (MNAALIAALLILGALTLDATA) are cleaved as a signal peptide. A Cell attachment site motif is present at residues 49–51 (RGD).

The protein belongs to the ixodegrin family. Post-translationally, contains 3 disulfide bonds. In terms of tissue distribution, expressed in salivary glands.

The protein localises to the secreted. In terms of biological role, tick salivary platelet aggregation inhibitor that plays an important part in the anti-hemostatic strategy of ticks. Inhibits platelet aggregation induced by ADP, thrombin and thromboxane A2 (TXA2). Blocks platelet adhesion to soluble collagen (most probably through the binding to alpha-2/beta-1 integrin (ITGA2/ITGB1)) and binds to purified glycoprotein IIb/IIIa (ITGA2B/ITGB3) in a dose-dependent manner. In vivo, reduces thrombus weight effectively in a rat arteriovenous shunt model and inhibits thrombosis in a carrageenan-induced mouse tail thrombosis model. The protein is Ixodegrin YY-39 of Ixodes scapularis (Black-legged tick).